The following is a 260-amino-acid chain: Hydroxyethylthiazole kinase 1 (260 aa).

Met39 contacts substrate. ATP is bound by residues Arg115 and Thr160. Gly187 is a substrate binding site.

This sequence belongs to the Thz kinase family. Mg(2+) serves as cofactor.

It catalyses the reaction 5-(2-hydroxyethyl)-4-methylthiazole + ATP = 4-methyl-5-(2-phosphooxyethyl)-thiazole + ADP + H(+). It functions in the pathway cofactor biosynthesis; thiamine diphosphate biosynthesis; 4-methyl-5-(2-phosphoethyl)-thiazole from 5-(2-hydroxyethyl)-4-methylthiazole: step 1/1. Functionally, catalyzes the phosphorylation of the hydroxyl group of 4-methyl-5-beta-hydroxyethylthiazole (THZ). The sequence is that of Hydroxyethylthiazole kinase 1 from Streptococcus pneumoniae (strain Taiwan19F-14).